Reading from the N-terminus, the 82-residue chain is Small ribosomal subunit protein bS16 (82 aa).

Belongs to the bacterial ribosomal protein bS16 family.

This chain is Small ribosomal subunit protein bS16, found in Pseudoalteromonas translucida (strain TAC 125).